The primary structure comprises 501 residues: Adenylosuccinate synthetase 2, chloroplastic (501 aa).

GTP-binding positions include 87-93 (GDEGKGK) and 115-117 (GHT). The Proton acceptor role is filled by aspartate 88. Residues aspartate 88 and glycine 115 each contribute to the Mg(2+) site. IMP contacts are provided by residues 88-91 (DEGK), 113-116 (NAGH), threonine 205, arginine 219, glutamine 300, threonine 315, and arginine 379. Catalysis depends on histidine 116, which acts as the Proton donor. 375–381 (NITGRPR) is a binding site for substrate. Residues arginine 381, 407–409 (KLD), and 490–492 (GIG) contribute to the GTP site.

It belongs to the adenylosuccinate synthetase family. In terms of assembly, homodimer. Requires Mg(2+) as cofactor.

Its subcellular location is the plastid. It is found in the chloroplast. It carries out the reaction IMP + L-aspartate + GTP = N(6)-(1,2-dicarboxyethyl)-AMP + GDP + phosphate + 2 H(+). It functions in the pathway purine metabolism; AMP biosynthesis via de novo pathway; AMP from IMP: step 1/2. In terms of biological role, plays an important role in the de novo pathway and in the salvage pathway of purine nucleotide biosynthesis. Catalyzes the first committed step in the biosynthesis of AMP from IMP. The sequence is that of Adenylosuccinate synthetase 2, chloroplastic from Capsicum frutescens (Cayenne pepper).